We begin with the raw amino-acid sequence, 461 residues long: ADP-specific phosphofructokinase (461 aa).

Residues 1–457 (MVRELLEKAR…FTSYLAMLKE (457 aa)) enclose the ADPK domain. Mg(2+) is bound by residues glutamate 268, glutamate 298, and aspartate 441. Aspartate 441 serves as the catalytic Proton acceptor.

This sequence belongs to the carbohydrate kinase PfkC family. It depends on Mg(2+) as a cofactor.

Its subcellular location is the cytoplasm. It carries out the reaction beta-D-fructose 6-phosphate + ADP = beta-D-fructose 1,6-bisphosphate + AMP + H(+). It participates in carbohydrate degradation; glycolysis. Catalyzes the phosphorylation of fructose 6-phosphate to fructose 1,6-bisphosphate using ADP as the phosphate donor. This is ADP-specific phosphofructokinase from Thermococcus kodakarensis (strain ATCC BAA-918 / JCM 12380 / KOD1) (Pyrococcus kodakaraensis (strain KOD1)).